Consider the following 389-residue polypeptide: MNLHEYQAKQLFADYGLPVPSGIPCSSADEAVAATKKLGGDKWVVKCQVHAGGRGKAGGVKVAGSEQEVRAFADQWLGKRLVTYQTDANGQPVNTILVETCGNIAKELYLGAVIDRSSRRVVFMASTEGGMDIETVAHNTPELIHKAALDPLTGPQPYQARELGFKLGLNAEQLKQFTKIFLGLGKMFVACDLSLLEINPLVITGEGNLLCLDGKINIDSNALYRQPKLKAWNDETQEDPREVEAARWDLNYVALDGNIGCMVNGAGLAMGTMDIIKHHGGFPANFLDVGGGATKERVTEAFKLILSDSKVKAVLVNIFGGIVRCDLIADGVIGAVAEVGVKVPVVVRLEGNNADLGSKKLAESGLNIIAATSLTDAAEQVVKAAEAVA.

Positions 9–244 (KQLFADYGLP…ETQEDPREVE (236 aa)) constitute an ATP-grasp domain. ATP is bound by residues Lys-46, 53 to 55 (GRG), Glu-99, Gly-102, and Glu-107. Asn-199 and Asp-213 together coordinate Mg(2+). Substrate is bound by residues Asn-264 and 321-323 (GIV).

Belongs to the succinate/malate CoA ligase beta subunit family. As to quaternary structure, heterotetramer of two alpha and two beta subunits. Mg(2+) serves as cofactor.

It catalyses the reaction succinate + ATP + CoA = succinyl-CoA + ADP + phosphate. The enzyme catalyses GTP + succinate + CoA = succinyl-CoA + GDP + phosphate. Its pathway is carbohydrate metabolism; tricarboxylic acid cycle; succinate from succinyl-CoA (ligase route): step 1/1. Succinyl-CoA synthetase functions in the citric acid cycle (TCA), coupling the hydrolysis of succinyl-CoA to the synthesis of either ATP or GTP and thus represents the only step of substrate-level phosphorylation in the TCA. The beta subunit provides nucleotide specificity of the enzyme and binds the substrate succinate, while the binding sites for coenzyme A and phosphate are found in the alpha subunit. This Tolumonas auensis (strain DSM 9187 / NBRC 110442 / TA 4) protein is Succinate--CoA ligase [ADP-forming] subunit beta.